An 845-amino-acid polypeptide reads, in one-letter code: Matrin-3 (845 aa).

S2 bears the N-acetylserine mark. K3 is modified (N6-acetyllysine; alternate). A Glycyl lysine isopeptide (Lys-Gly) (interchain with G-Cter in SUMO2); alternate cross-link involves residue K3. 7 positions are modified to phosphoserine: S4, S9, S14, S22, S41, S118, and S126. Residues K132 and K146 each participate in a glycyl lysine isopeptide (Lys-Gly) (interchain with G-Cter in SUMO2) cross-link. Disordered regions lie at residues 147-174 and 187-213; these read RRRT…YRVP and DSFD…ESGY. Position 150 is a phosphothreonine (T150). Residue S157 is modified to Phosphoserine. Y158 carries the post-translational modification Phosphotyrosine. Residues 160–174 show a composition bias toward basic and acidic residues; that stretch reads RDGRSATREPPYRVP. S164, S188, and S195 each carry phosphoserine. Residues 201–213 are compositionally biased toward basic and acidic residues; the sequence is DYDHGSRSQESGY. Y202 bears the Phosphotyrosine mark. Residues S206, S208, and S211 each carry the phosphoserine modification. Residue Y219 is modified to Phosphotyrosine. Phosphoserine is present on S234. K245 is covalently cross-linked (Glycyl lysine isopeptide (Lys-Gly) (interchain with G-Cter in SUMO2)). S264 carries the phosphoserine modification. K269 is covalently cross-linked (Glycyl lysine isopeptide (Lys-Gly) (interchain with G-Cter in SUMO2)). S275 is subject to Phosphoserine. Positions 342 to 394 are disordered; it reads PFMLQQSTNPAPGILGPPPPSFHLGGPAVGPRGNLGAGNGNLQGPRHMQKGRV. Positions 398 to 473 constitute an RRM 1 domain; it reads RVVHIMDFQR…KPVRVHLSQK (76 aa). Residues K478, K487, and K491 each participate in a glycyl lysine isopeptide (Lys-Gly) (interchain with G-Cter in SUMO2) cross-link. In terms of domain architecture, RRM 2 spans 496-571; it reads RVIHLSNLPH…RCVKVDLSEK (76 aa). Phosphoserine is present on residues S509 and S511. K515 is covalently cross-linked (Glycyl lysine isopeptide (Lys-Gly) (interchain with G-Cter in SUMO2)). Position 522 is an N6-acetyllysine; alternate (K522). K522 is covalently cross-linked (Glycyl lysine isopeptide (Lys-Gly) (interchain with G-Cter in SUMO2); alternate). Phosphoserine is present on S533. Glycyl lysine isopeptide (Lys-Gly) (interchain with G-Cter in SUMO2) cross-links involve residues K554 and K555. N6-acetyllysine is present on K571. The segment at 588–785 is disordered; that stretch reads KKDKSRKRSY…EYRIGPYQPN (198 aa). Phosphoserine occurs at positions 596, 598, 604, and 606. Residues 600–643 are compositionally biased toward basic and acidic residues; the sequence is DGKESPSDKKSKTDGAQKTENPAEGKEQEEKSGEDGEKDTKDDQ. Residues K617 and K630 each participate in a glycyl lysine isopeptide (Lys-Gly) (interchain with G-Cter in SUMO2) cross-link. The segment covering 653–665 has biased composition (acidic residues); sequence ESEDELLVDEEEA. Residues S654, S671, S673, and S674 each carry the phosphoserine modification. T679 is modified (phosphothreonine). S689 is modified (phosphoserine). Residues 689–704 show a composition bias toward basic and acidic residues; that stretch reads SDGKKEPSDKAVKKDA. The Nuclear localization signal motif lies at 708–716; sequence SKKKLKKVD. Residues K717 and K734 each participate in a glycyl lysine isopeptide (Lys-Gly) (interchain with G-Cter in SUMO2) cross-link. At T739 the chain carries Phosphothreonine. A phosphoserine mark is found at S745, S757, and S760. The span at 765 to 778 shows a compositional bias: basic and acidic residues; that stretch reads DENKEDYTIPDEYR. A Glycyl lysine isopeptide (Lys-Gly) (interchain with G-Cter in SUMO2) cross-link involves residue K768. The segment at 799 to 830 adopts a Matrin-type zinc-finger fold; it reads FYCKLCSLFYTNEEVAKNTHCSSLPHYQKLKK. At K834 the chain carries N6-acetyllysine; alternate. K834 is covalently cross-linked (Glycyl lysine isopeptide (Lys-Gly) (interchain with G-Cter in SUMO2); alternate).

As to quaternary structure, part of a complex consisting of SFPQ, NONO and MATR3. Interacts with AGO1 and AGO2. Part of a complex composed at least of ASH2L, EMSY, HCFC1, HSPA8, CCAR2, MATR3, MKI67, RBBP5, TUBB2A, WDR5 and ZNF335; this complex may have a histone H3-specific methyltransferase activity. Interacts with TARDBP. Part of the HDP-RNP complex composed of at least HEXIM1, PRKDC, XRCC5, XRCC6, paraspeckle proteins (SFPQ, NONO, PSPC1, RBM14, and MATR3) and NEAT1 RNA. Interacts with FUS. Interacts with IGF2BP1. Interacts with IGF2BP2 and IGF2BP3. Interacts with RBPMS.

It is found in the nucleus matrix. Functionally, may play a role in transcription or may interact with other nuclear matrix proteins to form the internal fibrogranular network. In association with the SFPQ-NONO heteromer may play a role in nuclear retention of defective RNAs. Plays a role in the regulation of DNA virus-mediated innate immune response by assembling into the HDP-RNP complex, a complex that serves as a platform for IRF3 phosphorylation and subsequent innate immune response activation through the cGAS-STING pathway. Binds to N6-methyladenosine (m6A)-containing mRNAs and contributes to MYC stability by binding to m6A-containing MYC mRNAs. May bind to specific miRNA hairpins. The protein is Matrin-3 (Matr3) of Rattus norvegicus (Rat).